Reading from the N-terminus, the 221-residue chain is Cytidylate kinase (221 aa).

ATP is bound at residue 11-19 (GPSGVGKST).

It belongs to the cytidylate kinase family. Type 1 subfamily.

Its subcellular location is the cytoplasm. The enzyme catalyses CMP + ATP = CDP + ADP. The catalysed reaction is dCMP + ATP = dCDP + ADP. This Mycoplasmopsis pulmonis (strain UAB CTIP) (Mycoplasma pulmonis) protein is Cytidylate kinase.